We begin with the raw amino-acid sequence, 119 residues long: Ribonuclease P protein component (119 aa).

It belongs to the RnpA family. In terms of assembly, consists of a catalytic RNA component (M1 or rnpB) and a protein subunit.

It catalyses the reaction Endonucleolytic cleavage of RNA, removing 5'-extranucleotides from tRNA precursor.. Its function is as follows. RNaseP catalyzes the removal of the 5'-leader sequence from pre-tRNA to produce the mature 5'-terminus. It can also cleave other RNA substrates such as 4.5S RNA. The protein component plays an auxiliary but essential role in vivo by binding to the 5'-leader sequence and broadening the substrate specificity of the ribozyme. The chain is Ribonuclease P protein component from Dictyoglomus turgidum (strain DSM 6724 / Z-1310).